The following is a 1051-amino-acid chain: Ubiquitin-activating enzyme E1 2 (1051 aa).

Residues 1-32 (MLPRKREIVAGEVEDLQKKTRAGEGEATREEG) show a composition bias toward basic and acidic residues. The disordered stretch occupies residues 1–42 (MLPRKREIVAGEVEDLQKKTRAGEGEATREEGDAAMAGRGNE). Repeat copies occupy residues 56-194 (GRET…GSVF) and 453-605 (GSTL…QMVI). The interval 56–605 (GRETMKPLFG…GAKCNTQMVI (550 aa)) is 2 approximate repeats. Residues Ala472, Asp498, Arg509, Lys522, and 570-571 (DN) contribute to the ATP site. The active-site Glycyl thioester intermediate is the Cys626.

It belongs to the ubiquitin-activating E1 family. As to quaternary structure, monomer.

It catalyses the reaction ATP + ubiquitin + [E1 ubiquitin-activating enzyme]-L-cysteine = AMP + diphosphate + S-ubiquitinyl-[E1 ubiquitin-activating enzyme]-L-cysteine.. Its pathway is protein modification; protein ubiquitination. Its function is as follows. Activates ubiquitin by first adenylating its C-terminal glycine residue with ATP, and thereafter linking this residue to the side chain of a cysteine residue in E1, yielding a ubiquitin-E1 thioester and free AMP. In Triticum aestivum (Wheat), this protein is Ubiquitin-activating enzyme E1 2 (UBA2).